A 302-amino-acid chain; its full sequence is Protoheme IX farnesyltransferase (302 aa).

9 consecutive transmembrane segments (helical) span residues 27-47 (VVAL…PGMV), 53-73 (LFGL…NHVI), 100-120 (LVFA…AVNV), 121-141 (LTAV…TVFL), 149-169 (IVWG…AVTG), 175-195 (PLLL…ALAI), 215-235 (VAFT…VSLV), 237-257 (FIIH…GIGF), and 273-293 (AMPT…LLLV).

It belongs to the UbiA prenyltransferase family. Protoheme IX farnesyltransferase subfamily.

The protein resides in the cell inner membrane. The enzyme catalyses heme b + (2E,6E)-farnesyl diphosphate + H2O = Fe(II)-heme o + diphosphate. It participates in porphyrin-containing compound metabolism; heme O biosynthesis; heme O from protoheme: step 1/1. Functionally, converts heme B (protoheme IX) to heme O by substitution of the vinyl group on carbon 2 of heme B porphyrin ring with a hydroxyethyl farnesyl side group. This is Protoheme IX farnesyltransferase from Thioalkalivibrio sulfidiphilus (strain HL-EbGR7).